Here is a 379-residue protein sequence, read N- to C-terminus: ATP-sensitive inward rectifier potassium channel 10 (379 aa).

Topologically, residues 1 to 61 (MTSVAKVYYS…LKDLWTTFID (61 aa)) are cytoplasmic. Arg-36 lines the 1,2-dioctanoyl-sn-glycero-3-phospho-(1D-myo-inositol-4,5-bisphosphate) pocket. The chain crosses the membrane as a helical span at residues 62–88 (MQWRYKLLLFSATFAGTWFLFGVVWYL). The Extracellular portion of the chain corresponds to 89-114 (VAVAHGDLLELGPPANHTPCVVQVHT). The cysteines at positions 108 and 140 are disulfide-linked. Residues 115–131 (LTGAFLFSLESQTTIGY) constitute an intramembrane region (discontinuously helical; Pore-forming). The short motif at 128-133 (TIGYGF) is the Selectivity filter element. The Extracellular segment spans residues 132-140 (GFRYISEEC). The chain crosses the membrane as a helical span at residues 141 to 166 (PLAIVLLIAQLVLTTILEIFITGTFL). The Cytoplasmic portion of the chain corresponds to 167–379 (AKIARPKKRA…SALSVRISNV (213 aa)). The 1,2-dioctanoyl-sn-glycero-3-phospho-(1D-myo-inositol-4,5-bisphosphate) site is built by Lys-168, Arg-171, and Lys-173. Residue 210 to 217 (GCQVTGKL) participates in ATP binding.

The protein belongs to the inward rectifier-type potassium channel (TC 1.A.2.1) family. KCNJ10 subfamily. In terms of assembly, homotetramer. In kidney cells, it forms heteromeric channels with Kir5.1/KCNJ16; this interaction is required for KCNJ16 localization to the basolateral membrane. Interacts with MAGI1, alone and possibly as a heteromer with KCNJ16; this interaction may facilitate KCNJ10/KCNJ16 potassium channel expression at the basolateral membrane in kidney cells. Interacts with PATJ. In terms of tissue distribution, widely expressed in adult brain, including in the neocortex, the stratum pyrimadale of the hippocampus and the piriform cortex. Expressed by cultured astrocytes and also by cocultured cortical neurons (at protein level). In the distal segment of the nephron, expressed in the distal convoluted tubule, the connecting tubule, and the early cortical collecting duct.

It localises to the membrane. The protein localises to the basolateral cell membrane. It catalyses the reaction K(+)(in) = K(+)(out). Channel activity is strongly regulated by variations of cytosolic pH; channels are activated by alkaline and inhibited by acidic pH values. Activated by phosphatidylinositol 4,5 biphosphate (PtdIns(4,5)P2). Inhibited by Ba(2+) and Cs(+). Functionally, may be responsible for potassium buffering action of glial cells in the brain. Inward rectifier potassium channels are characterized by a greater tendency to allow potassium to flow into the cell rather than out of it. Their voltage dependence is regulated by the concentration of extracellular potassium; as external potassium is raised, the voltage range of the channel opening shifts to more positive voltages. The inward rectification is mainly due to the blockage of outward current by internal magnesium. Can be blocked by extracellular barium and cesium. In the kidney, together with KCNJ16, mediates basolateral K(+) recycling in distal tubules; this process is critical for Na(+) reabsorption at the tubules. The protein is ATP-sensitive inward rectifier potassium channel 10 of Mus musculus (Mouse).